We begin with the raw amino-acid sequence, 155 residues long: Ribosome maturation factor RimP (155 aa).

It belongs to the RimP family.

Its subcellular location is the cytoplasm. In terms of biological role, required for maturation of 30S ribosomal subunits. The sequence is that of Ribosome maturation factor RimP from Hamiltonella defensa subsp. Acyrthosiphon pisum (strain 5AT).